A 309-amino-acid polypeptide reads, in one-letter code: GDP-6-deoxy-D-mannose reductase (309 aa).

NADP(+)-binding positions include 11–12, R32, 47–48, and 71–73; these read FV, DI, and AKS. 114–115 contacts substrate; the sequence is SS. Y140 is an NADP(+) binding site. Residues N169, D183, R209, and 269–272 each bind substrate; that span reads RPSE.

It belongs to the NAD(P)-dependent epimerase/dehydratase family. GDP-6-deoxy-D-mannose reductase subfamily.

The enzyme catalyses GDP-alpha-D-rhamnose + NAD(+) = GDP-4-dehydro-alpha-D-rhamnose + NADH + H(+). The catalysed reaction is GDP-alpha-D-rhamnose + NADP(+) = GDP-4-dehydro-alpha-D-rhamnose + NADPH + H(+). Its function is as follows. Reductase that catalyzes the conversion of GDP-6-deoxy-D-mannose to GDP-4-dehydro-6-deoxy-D-mannose (GDP-D-rhamnose). The sequence is that of GDP-6-deoxy-D-mannose reductase (rmd) from Aneurinibacillus thermoaerophilus.